Here is a 551-residue protein sequence, read N- to C-terminus: MGEINRRNFLKASMLGAAAAAVASASVVKGVVSPLVADAADIVAPITETSEFPYKVDAKYQRYNSLKNFFEKTFDPEENKTPIKFHYDDVSKITGKKDTGKDLPMLNAERLGIKGRPATHTETSILFHTQHLGAMLTQRHNETGWTGLDEALNAGAWAVEFDYSGFNAAGGGPGSAIPLYPINPMTNEIANEPVMVPGLYNWDNIDVESVRQQGQQWKFESKEEASKILKKATRLLGADLVGIAPYDERWTYSTWGRKIQKPCKMPNGRTKYLPWDLPKMLSGGGVEVFGHAKFEPDWEKYAGFKPKSVIVFVLEEDYEAIRTSPSVISSATVGKSYSNMAEVAYKIAVFLRKLGYYAAPCGNDTGISVPMAVQAGLGEAGRNGLLITQKFGPRHRIAKVYTDLELAPDKPRKFGVREFCRLCKKCADACPAQAISHEKDPKVLQPEDCEASENPYTEKWHVDSERCGSFWAYNGSPCSNCVAVCSWNKVETWNHDVARVATQIPLLQDAARKFDEWFGYSGPVNPDERLESGYVQNMVKDFWNNPESIKQ.

Positions 1-39 (MGEINRRNFLKASMLGAAAAAVASASVVKGVVSPLVADA) form a signal peptide, tat-type signal. Positions 411–440 (PRKFGVREFCRLCKKCADACPAQAISHEKD) constitute a 4Fe-4S ferredoxin-type 1 domain. [4Fe-4S] cluster contacts are provided by Cys420, Cys423, Cys426, Cys430, Cys467, Cys478, Cys481, and Cys485. In terms of domain architecture, 4Fe-4S ferredoxin-type 2 spans 478-496 (CSNCVAVCSWNKVETWNHD).

The protein belongs to the PceA family. It depends on [4Fe-4S] cluster as a cofactor. The cofactor is corrinoid. Post-translationally, predicted to be exported by the Tat system. The position of the signal peptide cleavage has been experimentally proven.

The protein localises to the cell membrane. It catalyses the reaction trichloroethene + chloride + A + H(+) = tetrachloroethene + AH2. The enzyme catalyses trichloroethene + AH2 = (Z)-1,2-dichloroethene + chloride + A + H(+). Its function is as follows. Catalyzes the reductive dechlorination of tetrachloroethene (PCE) to trichloroethene (TCE) and of trichloroethene to cis-1,2-dichloroethene (DCE). Reduced methyl viologen can act as the artificial electron donor. This Desulfitobacterium hafniense (Desulfitobacterium frappieri) protein is Tetrachloroethene reductive dehalogenase.